Consider the following 443-residue polypeptide: Protoheme IX farnesyltransferase, mitochondrial (443 aa).

Helical transmembrane passes span 174 to 194 (AAGF…LTSV), 235 to 255 (LAVS…TLGV), 257 to 277 (PLTG…YTPL), 280 to 300 (ISIA…VMGW), 309 to 329 (AGAF…FNAL), 364 to 384 (LLVL…FPIM), and 411 to 431 (LFFC…TCKR).

It belongs to the UbiA prenyltransferase family.

The protein localises to the mitochondrion membrane. The enzyme catalyses heme b + (2E,6E)-farnesyl diphosphate + H2O = Fe(II)-heme o + diphosphate. Its function is as follows. Converts protoheme IX and farnesyl diphosphate to heme O. The polypeptide is Protoheme IX farnesyltransferase, mitochondrial (COX10) (Pongo abelii (Sumatran orangutan)).